The sequence spans 123 residues: MPTIEQLVRKGRQAKPKKSKTLALKGSPLRRGVCTRVYTTTPRKPNSALRKVARVRLSSGIEVTAYIPGEGHNLQEHSIVLVRGGRVKDLPGVRYHIVRGALDTQGVKDRKQGRSLYGAKKAK.

The disordered stretch occupies residues 1–21 (MPTIEQLVRKGRQAKPKKSKT). Basic residues predominate over residues 9–20 (RKGRQAKPKKSK). The residue at position 89 (aspartate 89) is a 3-methylthioaspartic acid.

The protein belongs to the universal ribosomal protein uS12 family. In terms of assembly, part of the 30S ribosomal subunit. Contacts proteins S8 and S17. May interact with IF1 in the 30S initiation complex.

Its function is as follows. With S4 and S5 plays an important role in translational accuracy. Functionally, interacts with and stabilizes bases of the 16S rRNA that are involved in tRNA selection in the A site and with the mRNA backbone. Located at the interface of the 30S and 50S subunits, it traverses the body of the 30S subunit contacting proteins on the other side and probably holding the rRNA structure together. The combined cluster of proteins S8, S12 and S17 appears to hold together the shoulder and platform of the 30S subunit. The polypeptide is Small ribosomal subunit protein uS12 (Bifidobacterium longum subsp. infantis (strain ATCC 15697 / DSM 20088 / JCM 1222 / NCTC 11817 / S12)).